Reading from the N-terminus, the 329-residue chain is Phosphate acetyltransferase (329 aa).

It belongs to the phosphate acetyltransferase and butyryltransferase family.

It is found in the cytoplasm. The catalysed reaction is acetyl-CoA + phosphate = acetyl phosphate + CoA. It functions in the pathway metabolic intermediate biosynthesis; acetyl-CoA biosynthesis; acetyl-CoA from acetate: step 2/2. In Staphylococcus epidermidis (strain ATCC 12228 / FDA PCI 1200), this protein is Phosphate acetyltransferase (pta).